The following is a 645-amino-acid chain: Protein disulfide-isomerase A4 (645 aa).

Residues 1 to 20 (MRPRKAFLLLLLLGLVQLLA) form the signal peptide. 2 Thioredoxin domains span residues 21–169 (VAGA…EVSQ) and 158–301 (EEIV…EFLK). The segment at 24-58 (AEGPDEDSSNRENAIEDEEEEEEEDDDEEEDDLEV) is disordered. Over residues 38 to 58 (IEDEEEEEEEDDDEEEDDLEV) the composition is skewed to acidic residues. The CXXC signature appears at 91–94 (CGHC). 2 disulfide bridges follow: cysteine 91/cysteine 94 and cysteine 206/cysteine 209. An N6-acetyllysine modification is found at lysine 366. The Thioredoxin 3 domain occupies 505–636 (FKKGKLKPVI…LSKFIEEHAT (132 aa)). A CXXC motif is present at residues 555–558 (CGHC). An intrachain disulfide couples cysteine 555 to cysteine 558. The Prevents secretion from ER signature appears at 642 to 645 (KEEL).

The protein belongs to the protein disulfide isomerase family. Part of a large chaperone multiprotein complex comprising DNAJB11, HSP90B1, HSPA5, HYOU, PDIA2, PDIA4, PDIA6, PPIB, SDF2L1, UGGT1 and very small amounts of ERP29, but not, or at very low levels, CALR nor CANX. Component of a complex containing at least CRELD2, MANF, MATN3 and PDIA4. As to quaternary structure, (Microbial infection) Interacts with Human astrovirus-1 and Human astrovirus-8 spike protein VP25; this interaction seems to facilitate the uncoating during virus entry into the cell. Does not interact with Human astrovirus-2 spike protein VP25.

It is found in the endoplasmic reticulum lumen. Its subcellular location is the melanosome. The enzyme catalyses Catalyzes the rearrangement of -S-S- bonds in proteins.. The polypeptide is Protein disulfide-isomerase A4 (PDIA4) (Homo sapiens (Human)).